The sequence spans 330 residues: Glycerol-3-phosphate dehydrogenase [NAD(P)+] (330 aa).

Residues Ser-10, Trp-11, Arg-31, and Lys-104 each contribute to the NADPH site. 3 residues coordinate sn-glycerol 3-phosphate: Lys-104, Gly-131, and Ser-133. Ala-135 serves as a coordination point for NADPH. Sn-glycerol 3-phosphate-binding residues include Lys-186, Asp-239, Ser-249, Arg-250, and Asn-251. Catalysis depends on Lys-186, which acts as the Proton acceptor. Residue Arg-250 coordinates NADPH. Residues Val-274 and Glu-276 each coordinate NADPH.

It belongs to the NAD-dependent glycerol-3-phosphate dehydrogenase family.

It is found in the cytoplasm. The catalysed reaction is sn-glycerol 3-phosphate + NAD(+) = dihydroxyacetone phosphate + NADH + H(+). The enzyme catalyses sn-glycerol 3-phosphate + NADP(+) = dihydroxyacetone phosphate + NADPH + H(+). It functions in the pathway membrane lipid metabolism; glycerophospholipid metabolism. Functionally, catalyzes the reduction of the glycolytic intermediate dihydroxyacetone phosphate (DHAP) to sn-glycerol 3-phosphate (G3P), the key precursor for phospholipid synthesis. The protein is Glycerol-3-phosphate dehydrogenase [NAD(P)+] of Thermoanaerobacter sp. (strain X514).